The chain runs to 629 residues: tRNA uridine 5-carboxymethylaminomethyl modification enzyme MnmG (629 aa).

FAD is bound by residues 14–19, Val-126, and Ser-181; that span reads GAGHAG. Residue 273 to 287 participates in NAD(+) binding; it reads GPRYCPSIEDKVVRF. Gln-370 provides a ligand contact to FAD.

The protein belongs to the MnmG family. In terms of assembly, homodimer. Heterotetramer of two MnmE and two MnmG subunits. It depends on FAD as a cofactor.

The protein resides in the cytoplasm. Functionally, NAD-binding protein involved in the addition of a carboxymethylaminomethyl (cmnm) group at the wobble position (U34) of certain tRNAs, forming tRNA-cmnm(5)s(2)U34. This is tRNA uridine 5-carboxymethylaminomethyl modification enzyme MnmG from Bacillus cereus (strain ZK / E33L).